The chain runs to 158 residues: Small ribosomal subunit protein uS7 (158 aa).

Belongs to the universal ribosomal protein uS7 family. In terms of assembly, part of the 30S ribosomal subunit. Contacts proteins S9 and S11.

One of the primary rRNA binding proteins, it binds directly to 16S rRNA where it nucleates assembly of the head domain of the 30S subunit. Is located at the subunit interface close to the decoding center, probably blocks exit of the E-site tRNA. The polypeptide is Small ribosomal subunit protein uS7 (Acidiphilium cryptum (strain JF-5)).